The following is a 460-amino-acid chain: tRNA-splicing endonuclease subunit Sen2 (460 aa).

The tract at residues 143 to 215 is disordered; the sequence is EKEETPQHEP…SPSSHNGHVA (73 aa). Over residues 159–170 the composition is skewed to basic and acidic residues; sequence SSLEGRVEKDEL. Active-site residues include Y364 and H372. Phosphoserine is present on residues S403, S406, and S410. The active site involves K411.

The protein belongs to the tRNA-intron endonuclease family. TRNA splicing endonuclease is a heterotetramer composed of TSEN2, TSEN15, TSEN34/LENG5 and TSEN54. tRNA splicing endonuclease complex also contains proteins of the pre-mRNA 3'-end processing machinery such as CLP1, CPSF1, CPSF4 and CSTF2.

The protein resides in the nucleus. It localises to the nucleolus. It carries out the reaction pretRNA = a 3'-half-tRNA molecule with a 5'-OH end + a 5'-half-tRNA molecule with a 2',3'-cyclic phosphate end + an intron with a 2',3'-cyclic phosphate and a 5'-hydroxyl terminus.. Its function is as follows. Constitutes one of the two catalytic subunit of the tRNA-splicing endonuclease complex, a complex responsible for identification and cleavage of the splice sites in pre-tRNA. It cleaves pre-tRNA at the 5'- and 3'-splice sites to release the intron. The products are an intron and two tRNA half-molecules bearing 2',3'-cyclic phosphate and 5'-OH termini. There are no conserved sequences at the splice sites, but the intron is invariably located at the same site in the gene, placing the splice sites an invariant distance from the constant structural features of the tRNA body. Probably carries the active site for 5'-splice site cleavage. The tRNA splicing endonuclease is also involved in mRNA processing via its association with pre-mRNA 3'-end processing factors, establishing a link between pre-tRNA splicing and pre-mRNA 3'-end formation, suggesting that the endonuclease subunits function in multiple RNA-processing events. In Mus musculus (Mouse), this protein is tRNA-splicing endonuclease subunit Sen2 (Tsen2).